Reading from the N-terminus, the 60-residue chain is Metallothionein (60 aa).

The tract at residues 1–28 (MDPCDCAKTGTCNCGTSCTCANCSCTKC) is beta. Positions 4, 6, 12, 14, 18, 20, 23, 25, 28, 32, 33, 35, 36, 40, 43, 47, 49, 54, 58, and 59 each coordinate a divalent metal cation. The tract at residues 29–60 (KKSCCECCPSGCSKCASGCACKDKTCDTNCCQ) is alpha.

Belongs to the metallothionein superfamily. Type 1 family.

In terms of biological role, metallothioneins have a high content of cysteine residues that bind various heavy metals. This is Metallothionein (mt) from Gadus morhua (Atlantic cod).